Reading from the N-terminus, the 268-residue chain is Phosphatidylglycerol--prolipoprotein diacylglyceryl transferase (268 aa).

7 consecutive transmembrane segments (helical) span residues 10-30 (VALAIGPLKIHWYGLMYLIGI), 56-76 (LVFWLSMGVIVGGRLGYVLFY), 92-112 (WKGGMSFHGGFIGVMLAALWF), 120-140 (FFELMDFVAPLVPIGLGAGRI), 174-194 (PSQLYQFALEGVALFVILWLF), 202-222 (MAVSGMFSLCYGIFRFAVEFV), and 236-256 (WLTQGQLLCIPMIVGGLVLIW). Arg-139 provides a ligand contact to a 1,2-diacyl-sn-glycero-3-phospho-(1'-sn-glycerol).

This sequence belongs to the Lgt family.

Its subcellular location is the cell inner membrane. It carries out the reaction L-cysteinyl-[prolipoprotein] + a 1,2-diacyl-sn-glycero-3-phospho-(1'-sn-glycerol) = an S-1,2-diacyl-sn-glyceryl-L-cysteinyl-[prolipoprotein] + sn-glycerol 1-phosphate + H(+). The protein operates within protein modification; lipoprotein biosynthesis (diacylglyceryl transfer). Catalyzes the transfer of the diacylglyceryl group from phosphatidylglycerol to the sulfhydryl group of the N-terminal cysteine of a prolipoprotein, the first step in the formation of mature lipoproteins. This chain is Phosphatidylglycerol--prolipoprotein diacylglyceryl transferase, found in Pseudomonas putida (strain ATCC 47054 / DSM 6125 / CFBP 8728 / NCIMB 11950 / KT2440).